Reading from the N-terminus, the 520-residue chain is Serine/threonine-protein kinases drp72 (520 aa).

The region spanning 20–281 is the Protein kinase domain; sequence YTLQWIVGHG…NELARAVSAV (262 aa). Residues 26 to 34 and K49 each bind ATP; that span reads VGHGGMSTV. D148 acts as the Proton acceptor in catalysis. Disordered regions lie at residues 315-334 and 366-504; these read ARPTTSVPASPTVLPERQEK and SGDS…DAAD. Residues 374-394 are compositionally biased toward low complexity; it reads TPETITQTVTPTETTTSEEPT. A compositionally biased stretch (pro residues) spans 395–411; that stretch reads LAPPPVQPTRQPVPTPD. The segment covering 416 to 429 has biased composition (polar residues); the sequence is RLPTTTQESPTRVS. Positions 440–449 are enriched in low complexity; the sequence is EQTTPGGQPP. Residues 450-460 are compositionally biased toward polar residues; that stretch reads LSTLPTSLGWQ. Low complexity predominate over residues 469 to 484; it reads QGNPNTTGNPANPGTP. Residues 485-496 are compositionally biased toward gly residues; it reads GTTGGNGTGNAG.

It belongs to the protein kinase superfamily. Ser/Thr protein kinase family.

The catalysed reaction is L-seryl-[protein] + ATP = O-phospho-L-seryl-[protein] + ADP + H(+). The enzyme catalyses L-threonyl-[protein] + ATP = O-phospho-L-threonyl-[protein] + ADP + H(+). This Corynebacterium efficiens (strain DSM 44549 / YS-314 / AJ 12310 / JCM 11189 / NBRC 100395) protein is Serine/threonine-protein kinases drp72.